The primary structure comprises 179 residues: Small ribosomal subunit protein eS10x (179 aa).

A disordered region spans residues 90–179; the sequence is TLKKSAKPGG…AAAPSGSGLP (90 aa). Residues 108–129 are compositionally biased toward basic and acidic residues; sequence DRSRGPRHEGGDRPRFGDRDGY. A compositionally biased stretch (gly residues) spans 134–144; sequence RAGGEFGGEKG. Positions 145-156 are enriched in low complexity; sequence GAPADYQPSFQG. The segment covering 157–167 has biased composition (gly residues); it reads SGRGFGRGAGG. A compositionally biased stretch (low complexity) spans 168 to 179; that stretch reads YSAAAPSGSGLP.

The protein belongs to the eukaryotic ribosomal protein eS10 family.

It is found in the cytoplasm. This Arabidopsis thaliana (Mouse-ear cress) protein is Small ribosomal subunit protein eS10x (RPS10C).